Here is a 232-residue protein sequence, read N- to C-terminus: Protein Mis18-alpha (232 aa).

Phosphoserine occurs at positions 36, 39, and 40. A Mis18 domain is found at 79 to 177 (PLVFLCSGCR…SVEAIESYIL (99 aa)). Positions 84, 87, 140, and 143 each coordinate Zn(2+). Lys-161 participates in a covalent cross-link: Glycyl lysine isopeptide (Lys-Gly) (interchain with G-Cter in SUMO2). Ser-232 is modified (phosphoserine).

This sequence belongs to the mis18 family. As to quaternary structure, homodimer, and heterodimer with OIP5/MIS18B. Identified in a complex containing MIS18A, OIP5/MIS18B, MIS18BP1, RBBP7 and RBBP4.

The protein localises to the nucleus. Its subcellular location is the chromosome. The protein resides in the centromere. Required for recruitment of CENPA to centromeres and normal chromosome segregation during mitosis. The chain is Protein Mis18-alpha (MIS18A) from Otolemur garnettii (Small-eared galago).